We begin with the raw amino-acid sequence, 188 residues long: Elongation factor P (188 aa).

The protein belongs to the elongation factor P family.

It localises to the cytoplasm. Its pathway is protein biosynthesis; polypeptide chain elongation. Involved in peptide bond synthesis. Stimulates efficient translation and peptide-bond synthesis on native or reconstituted 70S ribosomes in vitro. Probably functions indirectly by altering the affinity of the ribosome for aminoacyl-tRNA, thus increasing their reactivity as acceptors for peptidyl transferase. The chain is Elongation factor P from Rickettsia massiliae (strain Mtu5).